The sequence spans 141 residues: ATP synthase epsilon chain (141 aa).

Belongs to the ATPase epsilon chain family. In terms of assembly, F-type ATPases have 2 components, CF(1) - the catalytic core - and CF(0) - the membrane proton channel. CF(1) has five subunits: alpha(3), beta(3), gamma(1), delta(1), epsilon(1). CF(0) has three main subunits: a, b and c.

The protein localises to the cell inner membrane. In terms of biological role, produces ATP from ADP in the presence of a proton gradient across the membrane. The polypeptide is ATP synthase epsilon chain (Pseudomonas fluorescens (strain Pf0-1)).